Consider the following 230-residue polypeptide: Large ribosomal subunit protein uL1 (230 aa).

This sequence belongs to the universal ribosomal protein uL1 family. Part of the 50S ribosomal subunit.

Its function is as follows. Binds directly to 23S rRNA. The L1 stalk is quite mobile in the ribosome, and is involved in E site tRNA release. Protein L1 is also a translational repressor protein, it controls the translation of the L11 operon by binding to its mRNA. This chain is Large ribosomal subunit protein uL1, found in Methylobacillus flagellatus (strain ATCC 51484 / DSM 6875 / VKM B-1610 / KT).